Consider the following 707-residue polypeptide: Protein kinase C-like 1B (707 aa).

In terms of domain architecture, C2 spans 1–114; sequence MLFTGTVRVR…KIGSANDIWV (114 aa). 2 consecutive Phorbol-ester/DAG-type zinc fingers follow at residues 170–220 and 248–298; these read GHKF…VWKC and PHRF…ANNC. The disordered stretch occupies residues 323 to 368; that stretch reads SKKKPSIMTDTSTDISGSSNSENSGYLQQISEDDSGTTSSRSASKV. Polar residues predominate over residues 330–365; it reads MTDTSTDISGSSNSENSGYLQQISEDDSGTTSSRSA. In terms of domain architecture, Protein kinase spans 378–638; sequence FTFMKVLGKG…EDAIRAHPFF (261 aa). ATP-binding positions include 384 to 392 and Lys-407; that span reads LGKGSFGKV. Asp-502 serves as the catalytic Proton acceptor. The AGC-kinase C-terminal domain maps to 639-707; it reads REIDWDALES…FSFINPHFTY (69 aa).

The protein belongs to the protein kinase superfamily. AGC Ser/Thr protein kinase family. PKC subfamily. In terms of tissue distribution, expressed selectively in neurons that receive, transmit and process environmental signals.

The protein localises to the membrane. It localises to the cytoplasm. The protein resides in the cytoskeleton. The catalysed reaction is L-seryl-[protein] + ATP = O-phospho-L-seryl-[protein] + ADP + H(+). It catalyses the reaction L-threonyl-[protein] + ATP = O-phospho-L-threonyl-[protein] + ADP + H(+). PKC is activated by diacylglycerol which in turn phosphorylates a range of cellular proteins. PKC also serves as the receptor for phorbol esters, a class of tumor promoters. Involved in neuropeptide secretion in motor axons. Likely to act via the extracellular signal-regulated kinase/mitogen-activated protein kinase (ERK/MAPK) pathway in the signaling response to various sensory neurons; temperature, odor, taste, and osmolality. Its role in regulation differs depending on the neuron in which it is acting; thermosensation in AFD neurons, osmolality in ASH neurons, olfactory perception in AWA and AWC neurons. Promotes dauer formation mediated by the insulin/IGF pathway. Required for resistance to antimitotic toxins. This Caenorhabditis elegans protein is Protein kinase C-like 1B.